The sequence spans 378 residues: Lipid-A-disaccharide synthase (378 aa).

The protein belongs to the LpxB family.

The catalysed reaction is a lipid X + a UDP-2-N,3-O-bis[(3R)-3-hydroxyacyl]-alpha-D-glucosamine = a lipid A disaccharide + UDP + H(+). Its pathway is bacterial outer membrane biogenesis; LPS lipid A biosynthesis. In terms of biological role, condensation of UDP-2,3-diacylglucosamine and 2,3-diacylglucosamine-1-phosphate to form lipid A disaccharide, a precursor of lipid A, a phosphorylated glycolipid that anchors the lipopolysaccharide to the outer membrane of the cell. This is Lipid-A-disaccharide synthase from Pseudomonas aeruginosa (strain UCBPP-PA14).